Reading from the N-terminus, the 795-residue chain is Nucleolar complex protein 3 homolog (795 aa).

Disordered stretches follow at residues 1–88 (MKPM…PLDM), 124–144 (RDDVINKYEKMPRKSKSEPEK), and 168–190 (IPSEEQEENEEEMDTEHTEEVPE). 2 stretches are compositionally biased toward basic and acidic residues: residues 22 to 39 (LKLDNKLKNKQFKQESSA) and 46 to 58 (QKQLREAVRDVRS). Residues 74-88 (EEEYEVEEESLPLDM) show a composition bias toward acidic residues. Positions 171-181 (EEQEENEEEMD) are enriched in acidic residues. Positions 447 to 492 (SYKDKKKNLSRMQRKWKKAEEKLERELLEAEASESKEKKLKLNTET) form a coiled coil.

This sequence belongs to the CBF/MAK21 family.

The protein localises to the nucleus. It localises to the nucleolus. In Xenopus laevis (African clawed frog), this protein is Nucleolar complex protein 3 homolog (noc3l).